A 455-amino-acid polypeptide reads, in one-letter code: Secreted triacylglycerol lipase LIP4 (455 aa).

The signal sequence occupies residues 1–19; the sequence is MKLNLFILGLLTLAAHAYA. An N-linked (GlcNAc...) asparagine glycan is attached at asparagine 98. A disulfide bridge links cysteine 115 with cysteine 284. The active-site Nucleophile is serine 197. N-linked (GlcNAc...) asparagine glycosylation occurs at asparagine 230. Catalysis depends on residues aspartate 344 and histidine 378. An intrachain disulfide couples cysteine 360 to cysteine 406.

The protein belongs to the AB hydrolase superfamily. Lipase family. Class Lip subfamily.

Its subcellular location is the secreted. The protein resides in the cell wall. The enzyme catalyses a triacylglycerol + H2O = a diacylglycerol + a fatty acid + H(+). The catalysed reaction is a monoacylglycerol + H2O = glycerol + a fatty acid + H(+). It carries out the reaction a diacylglycerol + H2O = a monoacylglycerol + a fatty acid + H(+). In terms of biological role, secreted lipase involved in Dandruff and seborrheic dermatitis (D/SD) probably via lipase-mediated breakdown of sebaceous lipids and release of irritating free fatty acids. Has triacylglycerol lipase activity and is able to hydrolyze triolein. Mostly converts monoolein to di- and triolein, while free fatty acids are only produced in low amounts. The sequence is that of Secreted triacylglycerol lipase LIP4 from Malassezia globosa (strain ATCC MYA-4612 / CBS 7966) (Dandruff-associated fungus).